The primary structure comprises 188 residues: Elongation factor P-like protein (188 aa).

It belongs to the elongation factor P family.

This Xylella fastidiosa (strain M12) protein is Elongation factor P-like protein.